The chain runs to 216 residues: Somatotropin (216 aa).

The signal sequence occupies residues 1 to 26 (MAADSQTSRLLTFTLLCLLWPQEAGA). Zn(2+) is bound at residue His-45. Cys-78 and Cys-189 are oxidised to a cystine. Ser-131 is subject to Phosphoserine. A Zn(2+)-binding site is contributed by Glu-198. Cysteines 206 and 214 form a disulfide.

It belongs to the somatotropin/prolactin family.

The protein localises to the secreted. Its function is as follows. Plays an important role in growth control. Its major role in stimulating body growth is to stimulate the liver and other tissues to secrete IGF1. It stimulates both the differentiation and proliferation of myoblasts. It also stimulates amino acid uptake and protein synthesis in muscle and other tissues. In Mesocricetus auratus (Golden hamster), this protein is Somatotropin (GH1).